The primary structure comprises 132 residues: Ribosome-binding factor A (132 aa).

This sequence belongs to the RbfA family. In terms of assembly, monomer. Binds 30S ribosomal subunits, but not 50S ribosomal subunits or 70S ribosomes.

It is found in the cytoplasm. Its function is as follows. One of several proteins that assist in the late maturation steps of the functional core of the 30S ribosomal subunit. Associates with free 30S ribosomal subunits (but not with 30S subunits that are part of 70S ribosomes or polysomes). Required for efficient processing of 16S rRNA. May interact with the 5'-terminal helix region of 16S rRNA. The sequence is that of Ribosome-binding factor A from Pseudomonas putida (strain GB-1).